Consider the following 317-residue polypeptide: Melanocyte-stimulating hormone receptor (317 aa).

Residues 1–37 (MPVQGSQRRLLGSLNSTPTATPRLGLAANQTGARCLE) lie on the Extracellular side of the membrane. Asn29 carries an N-linked (GlcNAc...) asparagine glycan. The chain crosses the membrane as a helical span at residues 38-63 (VSIPDGLFLSLGLVSLVENVLVVVAI). The Cytoplasmic portion of the chain corresponds to 64 to 72 (ARNRNLHSP). The chain crosses the membrane as a helical span at residues 73–93 (MYCFICCLALSDLLVSGSNML). The Extracellular portion of the chain corresponds to 94–118 (ETAVILLLEAGALAARAAVVQQLDN). The chain crosses the membrane as a helical span at residues 119–140 (VIDVITCSSMLSSLCFLGAIAV). Topologically, residues 141-163 (DRYISIFYALRYHSIVTLRRARR) are cytoplasmic. A helical membrane pass occupies residues 164–183 (VVAAIWVASVLFSTLFIAYC). The Extracellular segment spans residues 184–191 (DHAAVLLS). The helical transmembrane segment at 192–211 (LVVFFLAMLVLMAVLYVHML) threads the bilayer. The Cytoplasmic segment spans residues 212-240 (ARACQHAQGIAQLHKRQRPAHQGVGLKGA). A helical transmembrane segment spans residues 241–266 (ATLTILLGIFFLCWGPFFLHLTLIVL). The Extracellular segment spans residues 267–279 (CPQHPTCSCIFKN). A helical transmembrane segment spans residues 280-300 (FNLFLTLIICNAIIDPLIYAF). The Cytoplasmic segment spans residues 301–317 (RSQELRRTLKKVLLCSW). Cys315 is lipidated: S-palmitoyl cysteine.

The protein belongs to the G-protein coupled receptor 1 family. In terms of assembly, interacts with MGRN1, but does not undergo MGRN1-mediated ubiquitination; this interaction competes with GNAS-binding and thus inhibits agonist-induced cAMP production. Interacts with OPN3; the interaction results in a decrease in MC1R-mediated cAMP signaling and ultimately a decrease in melanin production in melanocytes.

The protein resides in the cell membrane. In terms of biological role, receptor for MSH (alpha, beta and gamma) and ACTH. The activity of this receptor is mediated by G proteins which activate adenylate cyclase. Mediates melanogenesis, the production of eumelanin (black/brown) and phaeomelanin (red/yellow), via regulation of cAMP signaling in melanocytes. The sequence is that of Melanocyte-stimulating hormone receptor (MC1R) from Trachypithecus auratus (Javan langur).